A 434-amino-acid polypeptide reads, in one-letter code: Enolase (434 aa).

Gln-165 is a binding site for (2R)-2-phosphoglycerate. Glu-207 serves as the catalytic Proton donor. Positions 244, 291, and 318 each coordinate Mg(2+). Residues Lys-343, Arg-372, Ser-373, and Lys-394 each contribute to the (2R)-2-phosphoglycerate site. Lys-343 functions as the Proton acceptor in the catalytic mechanism.

Belongs to the enolase family. It depends on Mg(2+) as a cofactor.

The protein resides in the cytoplasm. The protein localises to the secreted. It is found in the cell surface. The catalysed reaction is (2R)-2-phosphoglycerate = phosphoenolpyruvate + H2O. It participates in carbohydrate degradation; glycolysis; pyruvate from D-glyceraldehyde 3-phosphate: step 4/5. Its function is as follows. Catalyzes the reversible conversion of 2-phosphoglycerate (2-PG) into phosphoenolpyruvate (PEP). It is essential for the degradation of carbohydrates via glycolysis. The sequence is that of Enolase from Staphylococcus saprophyticus subsp. saprophyticus (strain ATCC 15305 / DSM 20229 / NCIMB 8711 / NCTC 7292 / S-41).